The sequence spans 784 residues: DNA repair and recombination protein RAD54-like (784 aa).

Residues 2 to 9 form a required for chromatin remodeling, strand pairing activities and coupling of ATPase activity region; sequence RRSLAPSQ. Phosphothreonine is present on Thr22. A Helicase ATP-binding domain is found at 169-344; the sequence is EGKKGNFNGC…FSLVNFVNPE (176 aa). Residue 182–189 participates in ATP binding; that stretch reads DEMGLGKT. Positions 295-298 match the DEGH box motif; that stretch reads DEGH. The Helicase C-terminal domain occupies 501-658; that stretch reads LLDFMLATIR…NNESAEKHFT (158 aa). Positions 742–784 are disordered; the sequence is QAIKESEETKQEAEDTSIPAKSKRKRSTTPESDDCNDEDFKGF. Basic and acidic residues predominate over residues 745 to 754; that stretch reads KESEETKQEA.

This sequence belongs to the SNF2/RAD54 helicase family. As to quaternary structure, interacts (via N-terminus) with spn-A/Rad51.

It is found in the nucleus. Functionally, involved in mitotic DNA repair and meiotic recombination. Functions in the recombinational DNA repair pathway. Essential for interhomolog gene conversion (GC), but may have a less important role in intersister GC than spn-A/Rad51. In the presence of DNA, spn-A/Rad51 enhances the ATPase activity of okr/Rad54. The protein is DNA repair and recombination protein RAD54-like of Drosophila willistoni (Fruit fly).